We begin with the raw amino-acid sequence, 288 residues long: Protoheme IX farnesyltransferase 2 (288 aa).

8 helical membrane-spanning segments follow: residues Ile16–Pro36, Phe38–Phe58, Leu88–Ala108, Trp111–Leu131, Ile139–Pro159, Leu166–Ala186, Ala227–Leu247, and Phe266–Leu286.

The protein belongs to the UbiA prenyltransferase family. Protoheme IX farnesyltransferase subfamily.

It is found in the cell inner membrane. The enzyme catalyses heme b + (2E,6E)-farnesyl diphosphate + H2O = Fe(II)-heme o + diphosphate. Its pathway is porphyrin-containing compound metabolism; heme O biosynthesis; heme O from protoheme: step 1/1. Functionally, converts heme B (protoheme IX) to heme O by substitution of the vinyl group on carbon 2 of heme B porphyrin ring with a hydroxyethyl farnesyl side group. The protein is Protoheme IX farnesyltransferase 2 of Paramagnetospirillum magneticum (strain ATCC 700264 / AMB-1) (Magnetospirillum magneticum).